The sequence spans 152 residues: Proteolipid protein 2 (152 aa).

The 119-residue stretch at 19-137 (FSRTRKGILL…DAYFTFPLRQ (119 aa)) folds into the MARVEL domain. 3 helical membrane-spanning segments follow: residues 25-45 (GILL…FSAG), 48-68 (GYSS…VIYM), and 85-105 (FFRT…VLVE). N108 carries N-linked (GlcNAc...) asparagine glycosylation. The helical transmembrane segment at 112-132 (IAAGVLGLLATCLFGYDAYFT) threads the bilayer.

Its subcellular location is the membrane. In terms of biological role, may play a role in cell differentiation in the intestinal epithelium. This chain is Proteolipid protein 2 (PLP2), found in Oryctolagus cuniculus (Rabbit).